A 453-amino-acid polypeptide reads, in one-letter code: uncharacterized protein (453 aa).

Disordered regions lie at residues 15 to 42 and 425 to 453; these read LKRK…SETM and TNEI…RHAK. Residues 425-437 are compositionally biased toward polar residues; that stretch reads TNEISSSNNSGTA. The segment covering 443 to 453 has biased composition (basic residues); the sequence is QNRKRNRRHAK.

This is an uncharacterized protein from Caenorhabditis elegans.